We begin with the raw amino-acid sequence, 596 residues long: Myosin light chain kinase 2, skeletal/cardiac muscle (596 aa).

The segment at M1–T224 is disordered. Residue A2 is modified to N-acetylalanine. Positions D40 to D63 are enriched in basic and acidic residues. Over residues E88 to P104 the composition is skewed to low complexity. Phosphoserine is present on residues S143, S149, and S151. The span at R189–E209 shows a compositional bias: basic and acidic residues. Positions M285–L540 constitute a Protein kinase domain. Residues L291–V299 and K314 contribute to the ATP site. Catalysis depends on D406, which acts as the Proton acceptor. T445 is modified (phosphothreonine). The interval I574–S586 is calmodulin-binding.

The protein belongs to the protein kinase superfamily. CAMK Ser/Thr protein kinase family. In terms of assembly, may interact with centrin. Heart and skeletal muscles. Increased expression in the apical tissue compared to the interventricular septal tissue.

It is found in the cytoplasm. The enzyme catalyses L-seryl-[myosin light chain] + ATP = O-phospho-L-seryl-[myosin light chain] + ADP + H(+). It carries out the reaction L-threonyl-[myosin light chain] + ATP = O-phospho-L-threonyl-[myosin light chain] + ADP + H(+). In terms of biological role, implicated in the level of global muscle contraction and cardiac function. Phosphorylates a specific serine in the N-terminus of a myosin light chain. The polypeptide is Myosin light chain kinase 2, skeletal/cardiac muscle (MYLK2) (Homo sapiens (Human)).